The sequence spans 75 residues: DNA-directed RNA polymerase subunit omega (75 aa).

Belongs to the RNA polymerase subunit omega family. In terms of assembly, the RNAP catalytic core consists of 2 alpha, 1 beta, 1 beta' and 1 omega subunit. When a sigma factor is associated with the core the holoenzyme is formed, which can initiate transcription.

The catalysed reaction is RNA(n) + a ribonucleoside 5'-triphosphate = RNA(n+1) + diphosphate. Functionally, promotes RNA polymerase assembly. Latches the N- and C-terminal regions of the beta' subunit thereby facilitating its interaction with the beta and alpha subunits. This Thermosipho melanesiensis (strain DSM 12029 / CIP 104789 / BI429) protein is DNA-directed RNA polymerase subunit omega.